An 891-amino-acid chain; its full sequence is Alanine--tRNA ligase (891 aa).

Zn(2+)-binding residues include H574, H578, C676, and H680.

Belongs to the class-II aminoacyl-tRNA synthetase family. It depends on Zn(2+) as a cofactor.

The protein localises to the cytoplasm. It carries out the reaction tRNA(Ala) + L-alanine + ATP = L-alanyl-tRNA(Ala) + AMP + diphosphate. In terms of biological role, catalyzes the attachment of alanine to tRNA(Ala) in a two-step reaction: alanine is first activated by ATP to form Ala-AMP and then transferred to the acceptor end of tRNA(Ala). Also edits incorrectly charged Ser-tRNA(Ala) and Gly-tRNA(Ala) via its editing domain. This chain is Alanine--tRNA ligase, found in Synechococcus sp. (strain WH7803).